Consider the following 368-residue polypeptide: tRNA 2-selenouridine synthase (368 aa).

Residues 15-138 (FLNQHPIMDV…LRQYLIGVIE (124 aa)) form the Rhodanese domain. Cys98 functions as the S-selanylcysteine intermediate in the catalytic mechanism.

It belongs to the SelU family. In terms of assembly, monomer.

It catalyses the reaction 5-methylaminomethyl-2-thiouridine(34) in tRNA + selenophosphate + (2E)-geranyl diphosphate + H2O + H(+) = 5-methylaminomethyl-2-selenouridine(34) in tRNA + (2E)-thiogeraniol + phosphate + diphosphate. The catalysed reaction is 5-methylaminomethyl-2-thiouridine(34) in tRNA + (2E)-geranyl diphosphate = 5-methylaminomethyl-S-(2E)-geranyl-thiouridine(34) in tRNA + diphosphate. The enzyme catalyses 5-methylaminomethyl-S-(2E)-geranyl-thiouridine(34) in tRNA + selenophosphate + H(+) = 5-methylaminomethyl-2-(Se-phospho)selenouridine(34) in tRNA + (2E)-thiogeraniol. It carries out the reaction 5-methylaminomethyl-2-(Se-phospho)selenouridine(34) in tRNA + H2O = 5-methylaminomethyl-2-selenouridine(34) in tRNA + phosphate. Functionally, involved in the post-transcriptional modification of the uridine at the wobble position (U34) of tRNA(Lys), tRNA(Glu) and tRNA(Gln). Catalyzes the conversion of 2-thiouridine (S2U-RNA) to 2-selenouridine (Se2U-RNA). Acts in a two-step process involving geranylation of 2-thiouridine (S2U) to S-geranyl-2-thiouridine (geS2U) and subsequent selenation of the latter derivative to 2-selenouridine (Se2U) in the tRNA chain. The polypeptide is tRNA 2-selenouridine synthase (Shewanella baltica (strain OS223)).